The following is an 837-amino-acid chain: MEPAAAGPGPLIVNNKQPQPPPPPPPATAQPPPGAPRAAGGLLPGGKAREFNRNQRKDSEGYSESPDLEFEYADTDKWAAELAELYSYTEGPEFLMNRKCFEEDFRIHVSDKKWTELDTNQHRTHAMRLLDGLEVTAREKRLKVARAILYVAQGTFGECSSEAEVQFWMRYNIFLLLEVGTFNALVELLNMEIDNSAACSSAVRKPAISLADSTDLRVLLNIMYLIVETVHQDCDGDKAEWRTMRQTFRAELGSPLYNNEPFAIMLFGMVTKFCSGHAPHFPMKKVLLLLWKTVLCTLGGFEELQSMKAEKRTLLGLPPLPEDSIKVIRNMRAASPPASASDLIEQQQKRGRREHKALIKQDNLDAFNERDPYKADDSREEEEENDDDSSLEGEAFPLERDEVMPPPLQHPQTDRLTCPKGLPWAPKVREKDIEMFLESSRSKFIGYTLGSDTNTVVGLPRPIHESIKTLKQHKYTSIAEVQAQMEEEYLRSPLSGGEEEVEQVPAETLYQGLLPSLPQYMIALLKILLAAAPTSKAKTDSINILADVLPEEMPTTVLQSMKLGVDVNRHKEVIVKAISAVLLLLLKHFKLNHIYQFEYMAQHLVFANCIPLILKFFNQNIMSYITAKNSISVLDYPHCVVNELPELTAESLEAGDNNQFCWRNLFSCINLLRILNKLTKWKHSRTMMLVVFKSAPILKRALKVKQAMMQLYVLKLLKVQTKYLGRQWRKSNMKTMSAIYQKVRHRLNDDWAYGNDLDARPWDFQAEECALRANIERFNARRYDRTHSNPDFLPVDNCLQSVLGQRVDLPEDFQMNYDLWLEREVFSKPISWEELLQ.

An N-acetylmethionine modification is found at methionine 1. 2 disordered regions span residues 1–67 (MEPA…ESPD) and 333–423 (AASP…KGLP). Over residues 18–35 (PQPPPPPPPATAQPPPGA) the composition is skewed to pro residues. Positions 47–60 (KAREFNRNQRKDSE) are enriched in basic and acidic residues. Phosphoserine occurs at positions 59, 335, and 339. Residues 356-377 (KALIKQDNLDAFNERDPYKADD) show a composition bias toward basic and acidic residues. A compositionally biased stretch (acidic residues) spans 378 to 391 (SREEEEENDDDSSL). Serine 788 carries the phosphoserine modification. Positions 796 to 837 (DNCLQSVLGQRVDLPEDFQMNYDLWLEREVFSKPISWEELLQ) are required for STRIPAK core complex formation.

It belongs to the STRIP family. In terms of assembly, part of the core of STRIPAK complexes composed of PP2A catalytic and scaffolding subunits, the striatins (PP2A regulatory subunits), the striatin-associated proteins MOB4, STRIP1 and STRIP2, PDCD10 and members of the STE20 kinases, such as STK24 and STK26. The STRIPAK complex can be extended by adapter proteins such as SLMAP:SIKE1, CTTNBP2 or CTTNBP2NL. Interacts with CDC42BPB. Interacts with CTTNBP2NL.

It is found in the cytoplasm. Plays a role in the regulation of cell morphology and cytoskeletal organization. Required in the cortical actin filament dynamics and cell shape. Part of the striatin-interacting phosphatase and kinase (STRIPAK) complexes. STRIPAK complexes have critical roles in protein (de)phosphorylation and are regulators of multiple signaling pathways including Hippo, MAPK, nuclear receptor and cytoskeleton remodeling. Different types of STRIPAK complexes are involved in a variety of biological processes such as cell growth, differentiation, apoptosis, metabolism and immune regulation. The polypeptide is Striatin-interacting protein 1 (Strip1) (Mus musculus (Mouse)).